The primary structure comprises 276 residues: Glucosamine-6-phosphate deaminase 2 (276 aa).

D72 acts as the Proton acceptor; for enolization step in catalysis. The stretch at I106–G130 forms a coiled coil. D141 acts as the For ring-opening step in catalysis. H143 (proton acceptor; for ring-opening step) is an active-site residue. E148 functions as the For ring-opening step in the catalytic mechanism. T161 is modified (phosphothreonine).

The protein belongs to the glucosamine/galactosamine-6-phosphate isomerase family. In terms of assembly, homohexamer.

It is found in the cytoplasm. The catalysed reaction is alpha-D-glucosamine 6-phosphate + H2O = beta-D-fructose 6-phosphate + NH4(+). Its pathway is nucleotide-sugar biosynthesis; UDP-N-acetyl-alpha-D-glucosamine biosynthesis; alpha-D-glucosamine 6-phosphate from D-fructose 6-phosphate: step 1/1. With respect to regulation, allosterically activated by N-acetylglucosamine-6-phosphate (GlcNAc6P). Catalyzes the reversible conversion of alpha-D-glucosamine 6-phosphate (GlcN-6P) into beta-D-fructose 6-phosphate (Fru-6P) and ammonium ion, a regulatory reaction step in de novo uridine diphosphate-N-acetyl-alpha-D-glucosamine (UDP-GlcNAc) biosynthesis via hexosamine pathway. Deamination is coupled to aldo-keto isomerization mediating the metabolic flux from UDP-GlcNAc toward Fru-6P. At high ammonium level can drive amination and isomerization of Fru-6P toward hexosamines and UDP-GlcNAc synthesis. Has a role in fine tuning the metabolic fluctuations of cytosolic UDP-GlcNAc and their effects on hyaluronan synthesis that occur during tissue remodeling. The sequence is that of Glucosamine-6-phosphate deaminase 2 from Bos taurus (Bovine).